Consider the following 571-residue polypeptide: Proline--tRNA ligase (571 aa).

The protein belongs to the class-II aminoacyl-tRNA synthetase family. ProS type 1 subfamily. As to quaternary structure, homodimer.

It localises to the cytoplasm. It catalyses the reaction tRNA(Pro) + L-proline + ATP = L-prolyl-tRNA(Pro) + AMP + diphosphate. In terms of biological role, catalyzes the attachment of proline to tRNA(Pro) in a two-step reaction: proline is first activated by ATP to form Pro-AMP and then transferred to the acceptor end of tRNA(Pro). As ProRS can inadvertently accommodate and process non-cognate amino acids such as alanine and cysteine, to avoid such errors it has two additional distinct editing activities against alanine. One activity is designated as 'pretransfer' editing and involves the tRNA(Pro)-independent hydrolysis of activated Ala-AMP. The other activity is designated 'posttransfer' editing and involves deacylation of mischarged Ala-tRNA(Pro). The misacylated Cys-tRNA(Pro) is not edited by ProRS. This Vibrio parahaemolyticus serotype O3:K6 (strain RIMD 2210633) protein is Proline--tRNA ligase.